Here is a 152-residue protein sequence, read N- to C-terminus: Ribonuclease H (152 aa).

One can recognise an RNase H type-1 domain in the interval 1–142 (MKEVTIYTDG…CDELARAAIA (142 aa)). Positions 9, 47, 69, and 134 each coordinate Mg(2+).

It belongs to the RNase H family. In terms of assembly, monomer. Mg(2+) serves as cofactor.

The protein resides in the cytoplasm. The enzyme catalyses Endonucleolytic cleavage to 5'-phosphomonoester.. Endonuclease that specifically degrades the RNA of RNA-DNA hybrids. The sequence is that of Ribonuclease H from Moorella thermoacetica (strain ATCC 39073 / JCM 9320).